The following is a 350-amino-acid chain: uncharacterized protein (350 aa).

Mn(2+) contacts are provided by Asp214, Asp225, His289, Glu318, and Glu332.

It belongs to the peptidase M24B family. Mn(2+) is required as a cofactor.

This is an uncharacterized protein from Staphylococcus saprophyticus subsp. saprophyticus (strain ATCC 15305 / DSM 20229 / NCIMB 8711 / NCTC 7292 / S-41).